A 713-amino-acid chain; its full sequence is Oligopeptidase PhomG (713 aa).

His461 contacts Zn(2+). Glu462 is an active-site residue. Residues His465 and His468 each contribute to the Zn(2+) site.

This sequence belongs to the peptidase M3 family. Monomer. Zn(2+) serves as cofactor.

It functions in the pathway mycotoxin biosynthesis. In terms of biological role, oligopeptidase; part of the gene cluster that mediates the biosynthesis of the phomopsins, a group of hexapeptide mycotoxins which infects lupins and causes lupinosis disease in livestock. Within the pathway, phomG and phomG' are probably involved in the processing of the phomA and phomA' precursors. The pathway starts with the processing of the precursor phomA by several endopeptidases including kexin proteases as well as the cluster-specific S41 family peptidase phomP1 and the oligopeptidase phomG to produce 10 identical copies of the hexapeptide Tyr-Val-Ile-Pro-Ile-Asp. After being excised from the precursor peptide, the core peptides are cyclized and modified post-translationally by enzymes encoded within the gene cluster. The timing and order of proteolysis of the phomA precursor and PTMs are still unknown. Two tyrosinase-like enzymes, phomQ1 and phomQ2, catalyze the chlorination and hydroxylation of Tyr, respectively. PhomYb, is proposed to be involved in the construction of the macrocyclic structure. The other 4 ustYa family proteins may be involved in PTMs that generate the unique structure of phomopsin A. PhomYa is required for the hydroxylation of C-beta of Tyr. PhomYc, phomYd, and phomYe are responsible for the biosynthesis of 2,3-dehydroisoleucine (dIle), 2,3-dehydroaspartic acid (dAsp), and 3,4-dehydroproline (dPro), respectively. While dIle formation by phomYc is indispensable for the installation of dAsp by phomYd, the order of the other PTMs have not been elucidated yet. Most of the biosynthetic enzymes likely have broad substrate specificity, and thus, there might be a metabolic grid from a precursor to phomopsin A. The enzyme(s) responsible for the biosynthesis of 3,4-dehydrovaline (dVal) have also not been identified yet. Finally, phomM acts as an S-adenosylmethionine-dependent alpha-N-methyltransferase that catalyzes two successive N-methylation reactions, converting N-desmethyl-phomopsin A to phomopsin A and phomopsin A further to an N,N-dimethylated congener called phomopsin E. In Diaporthe leptostromiformis (Lupinosis disease fungus), this protein is Oligopeptidase PhomG.